The sequence spans 537 residues: Extracellular exo-inulinase (537 aa).

An N-terminal signal peptide occupies residues 1–19; sequence MAPLSKALSVFMLMGITYA. Beta-D-fructose is bound by residues Asn-40 and Asp-41. Asp-41 serves as the catalytic Nucleophile. Asn-49 carries N-linked (GlcNAc...) asparagine glycosylation. Residues Gln-57 and Trp-65 each coordinate beta-D-fructose. Asn-67 is a glycosylation site (N-linked (GlcNAc...) asparagine). Ser-103 lines the beta-D-fructose pocket. N-linked (GlcNAc...) asparagine glycosylation is found at Asn-111 and Asn-112. Beta-D-fructose is bound by residues Arg-188, Asp-189, and Glu-241. Residue Glu-241 is the Proton donor/acceptor of the active site. N-linked (GlcNAc...) asparagine glycans are attached at residues Asn-254 and Asn-300. Beta-D-fructose is bound at residue Trp-335. N-linked (GlcNAc...) asparagine glycosylation is found at Asn-398 and Asn-430.

Belongs to the glycosyl hydrolase 32 family.

The protein localises to the secreted. It catalyses the reaction Hydrolysis of terminal, non-reducing (2-&gt;1)- and (2-&gt;6)-linked beta-D-fructofuranose residues in fructans.. Its function is as follows. Exo-inulinase involved in utilization of the plant storage polymer inulin, consisting of fructooligosaccharides with a degree of polymerization (DP) value from 2 to 60. Splits off terminal fructose units successively from the non-reducing end of the inulin molecule, and also hydrolyzes levan, stachyose and raffinose. Hydrolyzes both beta-2,1- as well as beta-2,6-fructosyl linkages in fructooligosaccharides. In Aspergillus awamori (Black koji mold), this protein is Extracellular exo-inulinase.